A 478-amino-acid chain; its full sequence is tRNA(Ile)-lysidine synthase (478 aa).

27–32 (SGGSDS) provides a ligand contact to ATP.

The protein belongs to the tRNA(Ile)-lysidine synthase family.

It localises to the cytoplasm. It catalyses the reaction cytidine(34) in tRNA(Ile2) + L-lysine + ATP = lysidine(34) in tRNA(Ile2) + AMP + diphosphate + H(+). In terms of biological role, ligates lysine onto the cytidine present at position 34 of the AUA codon-specific tRNA(Ile) that contains the anticodon CAU, in an ATP-dependent manner. Cytidine is converted to lysidine, thus changing the amino acid specificity of the tRNA from methionine to isoleucine. This Rickettsia africae (strain ESF-5) protein is tRNA(Ile)-lysidine synthase.